We begin with the raw amino-acid sequence, 501 residues long: Lysine--tRNA ligase (501 aa).

The Mg(2+) site is built by E402 and E409.

Belongs to the class-II aminoacyl-tRNA synthetase family. Homodimer. Requires Mg(2+) as cofactor.

Its subcellular location is the cytoplasm. It catalyses the reaction tRNA(Lys) + L-lysine + ATP = L-lysyl-tRNA(Lys) + AMP + diphosphate. This Helicobacter pylori (strain HPAG1) protein is Lysine--tRNA ligase.